Consider the following 156-residue polypeptide: Small ribosomal subunit protein uS7 (156 aa).

This sequence belongs to the universal ribosomal protein uS7 family. In terms of assembly, part of the 30S ribosomal subunit. Contacts proteins S9 and S11.

One of the primary rRNA binding proteins, it binds directly to 16S rRNA where it nucleates assembly of the head domain of the 30S subunit. Is located at the subunit interface close to the decoding center, probably blocks exit of the E-site tRNA. This Magnetococcus marinus (strain ATCC BAA-1437 / JCM 17883 / MC-1) protein is Small ribosomal subunit protein uS7.